The following is a 55-amino-acid chain: Large ribosomal subunit protein bL33 (55 aa).

A compositionally biased stretch (basic and acidic residues) spans 1-11 (MAKGARDKIKL). Residues 1–24 (MAKGARDKIKLESTAGTGHFYTTT) form a disordered region. Residues 14 to 24 (TAGTGHFYTTT) are compositionally biased toward polar residues.

The protein belongs to the bacterial ribosomal protein bL33 family.

This is Large ribosomal subunit protein bL33 from Burkholderia multivorans (strain ATCC 17616 / 249).